A 364-amino-acid polypeptide reads, in one-letter code: DNA polymerase IV (364 aa).

Positions 14 to 198 (IIHIDMDAFF…LPIEKFHGVG (185 aa)) constitute a UmuC domain. The Mg(2+) site is built by Asp18 and Asp116. The active site involves Glu117.

This sequence belongs to the DNA polymerase type-Y family. Monomer. The cofactor is Mg(2+).

It localises to the cytoplasm. The enzyme catalyses DNA(n) + a 2'-deoxyribonucleoside 5'-triphosphate = DNA(n+1) + diphosphate. Functionally, poorly processive, error-prone DNA polymerase involved in untargeted mutagenesis. Copies undamaged DNA at stalled replication forks, which arise in vivo from mismatched or misaligned primer ends. These misaligned primers can be extended by PolIV. Exhibits no 3'-5' exonuclease (proofreading) activity. May be involved in translesional synthesis, in conjunction with the beta clamp from PolIII. The chain is DNA polymerase IV from Streptococcus pyogenes serotype M12 (strain MGAS2096).